The sequence spans 329 residues: MVQKYYESDADPRTLEDKTIAVIGYGSQGRGQALNLRDSGCRVVIGLRPGGSWQKASEDGFEVYSVAEAVKRADVIQILLPDENQAAVYRAEISPNIRENACLMFSHGFNIHYGQIVPPPTVDVVMVAPKGPGHMVRRTYEEGKGVPALIAVHQDATGQARAIALAYARGIGATRAVVFETTFAEETETDLFGEQAVLCGGITSLIKAGFETLVDAGYAPEMAYLEVLHETKLIVDLIYEGGFTKMRDSISNTAQYGDLTRGPRVIGPETYMAMQEILEEIQNGKFAKEWMLENMVNRPVFNALTRADEEHLIEQVGAEIRGFMPQFRK.

The 180-residue stretch at 2–181 folds into the KARI N-terminal Rossmann domain; the sequence is VQKYYESDAD…GATRAVVFET (180 aa). NADP(+)-binding positions include 25-28, Arg-48, Ser-52, and 82-85; these read YGSQ and DENQ. His-107 is an active-site residue. Residue Gly-133 coordinates NADP(+). Residues 182–327 enclose the KARI C-terminal knotted domain; the sequence is TFAEETETDL…AEIRGFMPQF (146 aa). Mg(2+) contacts are provided by Asp-190, Glu-194, Glu-226, and Glu-230. Ser-251 contacts substrate.

Belongs to the ketol-acid reductoisomerase family. Mg(2+) is required as a cofactor.

The catalysed reaction is (2R)-2,3-dihydroxy-3-methylbutanoate + NADP(+) = (2S)-2-acetolactate + NADPH + H(+). It carries out the reaction (2R,3R)-2,3-dihydroxy-3-methylpentanoate + NADP(+) = (S)-2-ethyl-2-hydroxy-3-oxobutanoate + NADPH + H(+). Its pathway is amino-acid biosynthesis; L-isoleucine biosynthesis; L-isoleucine from 2-oxobutanoate: step 2/4. It participates in amino-acid biosynthesis; L-valine biosynthesis; L-valine from pyruvate: step 2/4. Its function is as follows. Involved in the biosynthesis of branched-chain amino acids (BCAA). Catalyzes an alkyl-migration followed by a ketol-acid reduction of (S)-2-acetolactate (S2AL) to yield (R)-2,3-dihydroxy-isovalerate. In the isomerase reaction, S2AL is rearranged via a Mg-dependent methyl migration to produce 3-hydroxy-3-methyl-2-ketobutyrate (HMKB). In the reductase reaction, this 2-ketoacid undergoes a metal-dependent reduction by NADPH to yield (R)-2,3-dihydroxy-isovalerate. The sequence is that of Ketol-acid reductoisomerase (NADP(+)) from Methanoculleus marisnigri (strain ATCC 35101 / DSM 1498 / JR1).